A 685-amino-acid polypeptide reads, in one-letter code: DNA ligase (685 aa).

Residues 39-43 (DGEYD), 88-89 (SL), and glutamate 119 each bind NAD(+). The active-site N6-AMP-lysine intermediate is the lysine 121. The NAD(+) site is built by arginine 142, glutamate 182, lysine 302, and lysine 326. Residues cysteine 420, cysteine 423, cysteine 438, and cysteine 443 each coordinate Zn(2+). The 80-residue stretch at 606–685 (DNATFFSEKR…QTFLEHLDRG (80 aa)) folds into the BRCT domain.

The protein belongs to the NAD-dependent DNA ligase family. LigA subfamily. The cofactor is Mg(2+). Requires Mn(2+) as cofactor.

It carries out the reaction NAD(+) + (deoxyribonucleotide)n-3'-hydroxyl + 5'-phospho-(deoxyribonucleotide)m = (deoxyribonucleotide)n+m + AMP + beta-nicotinamide D-nucleotide.. In terms of biological role, DNA ligase that catalyzes the formation of phosphodiester linkages between 5'-phosphoryl and 3'-hydroxyl groups in double-stranded DNA using NAD as a coenzyme and as the energy source for the reaction. It is essential for DNA replication and repair of damaged DNA. The sequence is that of DNA ligase from Desulforapulum autotrophicum (strain ATCC 43914 / DSM 3382 / VKM B-1955 / HRM2) (Desulfobacterium autotrophicum).